The sequence spans 260 residues: Putative ABC transporter substrate-binding lipoprotein YvgL (260 aa).

The first 20 residues, 1–20 (MFKKYSIFIAALTAFLLVAG), serve as a signal peptide directing secretion. Residue Cys21 is the site of N-palmitoyl cysteine attachment. The S-diacylglycerol cysteine moiety is linked to residue Cys21. 5 residues coordinate molybdate: Ser43, Ser71, Ala151, Val178, and Tyr196.

The protein belongs to the bacterial solute-binding protein ModA family.

Its subcellular location is the cell membrane. In Bacillus subtilis (strain 168), this protein is Putative ABC transporter substrate-binding lipoprotein YvgL (yvgL).